Consider the following 404-residue polypeptide: Sulfate adenylyltransferase (404 aa).

The protein belongs to the sulfate adenylyltransferase family.

It catalyses the reaction sulfate + ATP + H(+) = adenosine 5'-phosphosulfate + diphosphate. The protein operates within sulfur metabolism; hydrogen sulfide biosynthesis; sulfite from sulfate: step 1/3. The polypeptide is Sulfate adenylyltransferase (Chlorobaculum tepidum (strain ATCC 49652 / DSM 12025 / NBRC 103806 / TLS) (Chlorobium tepidum)).